Here is a 74-residue protein sequence, read N- to C-terminus: UPF0291 protein EF_0064 (74 aa).

The interval Y53 to D74 is disordered. A compositionally biased stretch (basic and acidic residues) spans T61–D74.

This sequence belongs to the UPF0291 family.

The protein resides in the cytoplasm. This Enterococcus faecalis (strain ATCC 700802 / V583) protein is UPF0291 protein EF_0064.